The chain runs to 220 residues: Metalloproteinase inhibitor 2 (220 aa).

Residues 1-26 (MGAAARSLPLAFCLLLLGTLLPRADA) form the signal peptide. Cysteine 27 contacts Zn(2+). Positions 27–30 (CSCS) are involved in metalloproteinase-binding. Disulfide bonds link cysteine 27–cysteine 98, cysteine 29–cysteine 127, cysteine 39–cysteine 152, cysteine 154–cysteine 201, cysteine 159–cysteine 164, and cysteine 172–cysteine 193. The NTR domain occupies 27–152 (CSCSPVHPQQ…SLNHRYQMGC (126 aa)).

It belongs to the protease inhibitor I35 (TIMP) family. As to quaternary structure, interacts (via the C-terminal) with MMP2 (via the C-terminal PEX domain); the interaction inhibits the MMP2 activity. Post-translationally, the activity of TIMP2 is dependent on the presence of disulfide bonds.

It localises to the secreted. Its function is as follows. Complexes with metalloproteinases (such as collagenases) and irreversibly inactivates them by binding to their catalytic zinc cofactor. This chain is Metalloproteinase inhibitor 2 (TIMP2), found in Bos taurus (Bovine).